Here is a 101-residue protein sequence, read N- to C-terminus: Chaperone modulatory protein CbpM (101 aa).

This sequence belongs to the CbpM family.

Functionally, interacts with CbpA and inhibits both the DnaJ-like co-chaperone activity and the DNA binding activity of CbpA. Together with CbpA, modulates the activity of the DnaK chaperone system. Does not inhibit the co-chaperone activity of DnaJ. The chain is Chaperone modulatory protein CbpM from Salmonella arizonae (strain ATCC BAA-731 / CDC346-86 / RSK2980).